The chain runs to 133 residues: Large ribosomal subunit protein uL22 (133 aa).

This sequence belongs to the universal ribosomal protein uL22 family. In terms of assembly, part of the 50S ribosomal subunit.

Functionally, this protein binds specifically to 23S rRNA; its binding is stimulated by other ribosomal proteins, e.g. L4, L17, and L20. It is important during the early stages of 50S assembly. It makes multiple contacts with different domains of the 23S rRNA in the assembled 50S subunit and ribosome. Its function is as follows. The globular domain of the protein is located near the polypeptide exit tunnel on the outside of the subunit, while an extended beta-hairpin is found that lines the wall of the exit tunnel in the center of the 70S ribosome. The sequence is that of Large ribosomal subunit protein uL22 from Aquifex aeolicus (strain VF5).